A 251-amino-acid polypeptide reads, in one-letter code: Imidazole glycerol phosphate synthase subunit HisF (251 aa).

Catalysis depends on residues D11 and D130.

The protein belongs to the HisA/HisF family. Heterodimer of HisH and HisF.

It is found in the cytoplasm. The enzyme catalyses 5-[(5-phospho-1-deoxy-D-ribulos-1-ylimino)methylamino]-1-(5-phospho-beta-D-ribosyl)imidazole-4-carboxamide + L-glutamine = D-erythro-1-(imidazol-4-yl)glycerol 3-phosphate + 5-amino-1-(5-phospho-beta-D-ribosyl)imidazole-4-carboxamide + L-glutamate + H(+). It participates in amino-acid biosynthesis; L-histidine biosynthesis; L-histidine from 5-phospho-alpha-D-ribose 1-diphosphate: step 5/9. Functionally, IGPS catalyzes the conversion of PRFAR and glutamine to IGP, AICAR and glutamate. The HisF subunit catalyzes the cyclization activity that produces IGP and AICAR from PRFAR using the ammonia provided by the HisH subunit. The sequence is that of Imidazole glycerol phosphate synthase subunit HisF from Flavobacterium johnsoniae (strain ATCC 17061 / DSM 2064 / JCM 8514 / BCRC 14874 / CCUG 350202 / NBRC 14942 / NCIMB 11054 / UW101) (Cytophaga johnsonae).